The primary structure comprises 917 residues: MGSFRSSLFILVLHLLEGAQSNSLIQLNGNGYEGIVIAIDPNVPEDERLIQNIKDMVTKASPYLFEATEKRFYFKNVAILIPASWKAKPEYVKPKLETYKNADVVVTEPNPPENDGPYTEQMGNCGEKGEKIYFTPDFVAGKKVLQYGPQGRVFVHEWAHLRWGVFNEYNNEQKFYLSNKKEQPVICSAAIRGTNVLPQCQGGSCVTKPCRADRVTGLFQKECEFIPDPQQSEKASIMFAQSIDTVVEFCKEKNHNKEAPNDQNQKCNLRSTWEVIQDSEDFKKTTPMTTQPPAPTFSLLQIGQRIVCLVLDKSGSMTVGGRLKRLNQAGKLFLLQTVEQGAWVGMVAFDSAAYVKSELVQINSAAERDALARSLPTAASGGTSICSGLRSAFTVIKKKYPTDGSEIVLLTDGEDNTISACFPEVKQNGAIIHTVALGPSAAKELEELSQMTGGLQTYASDQAENNGLIDAFGALSSGNRAASQRSIQLESQGLTLQNNEWMNGTVVVDSTVGKDTLFLITLERKFLSPIPFFGVPSGRSQDSFLVGKHNKMAYFQVPGTAKVGMWKYSLQASSQTLTLTVSSRRSSATLPPVTVTSKMNKDTGKFPSPMVVYTKIHQGTLPILRAKVTALIESENGKTVTLELLDNGAGADATKNDGIYSRYFTAYDANGRYSVKVWALGGVNTPRRRAPPLWSGAMYIRGWIENGEIKWNPPRPDINKDDLQGKQVCFSRTASGGSFVASDVPKSPIPDLFPPCKITDLKAGIQGDNLINLTWTAPGDDYDHGRADRYIIRISTNILDLRDKFNDSVQVNTTDLIPKEANSEEVFVFKPEGIPFTNGTDLFIAVQAVDKTNLKSEISNIAQVSLFLPPEAPPETPPETPAPSLPCPEIQVNSTIPGIHILKIMWKWLGELQLSIA.

An N-terminal signal peptide occupies residues 1-21; sequence MGSFRSSLFILVLHLLEGAQS. The metalloprotease domain stretch occupies residues 46-199; it reads DERLIQNIKD…AIRGTNVLPQ (154 aa). Position 156 (His156) interacts with Zn(2+). Glu157 is a catalytic residue. Zn(2+) contacts are provided by His160 and Asn167. Residues 306 to 475 enclose the VWFA domain; it reads IVCLVLDKSG…NGLIDAFGAL (170 aa). 6 N-linked (GlcNAc...) asparagine glycosylation sites follow: Asn503, Asn772, Asn806, Asn812, Asn838, and Asn893.

It belongs to the CLCR family. In terms of processing, glycosylated. Post-translationally, the translation product is autoproteolytically cleaved by the metalloprotease domain in the endoplasmic reticulum into a N-terminal and a C-terminal products that remain physically associated with each other. The cleavage is necessary for calcium-activated chloride channel (CaCC) activation activity. Expressed in ileum, trachea, and the major salivary glands. In ileum, expressed to the crypt and villus epithelia, whereas in trachea expressed in both surface epithelium and submucosal glands.

It is found in the secreted. Its subcellular location is the extracellular space. In terms of biological role, may be involved in mediating calcium-activated chloride conductance. May play critical roles in goblet cell metaplasia, mucus hypersecretion, cystic fibrosis and AHR. May be involved in the regulation of mucus production and/or secretion by goblet cells. Involved in the regulation of tissue inflammation in the innate immune response. May play a role as a tumor suppressor. Induces MUC5AC. Induces a cAMP-dependent chloride conductance possibly through effects on CFTR in colon carcinoma cells. This Sus scrofa (Pig) protein is Calcium-activated chloride channel regulator 1 (CLCA1).